The primary structure comprises 267 residues: DNA repair protein RecO (267 aa).

It belongs to the RecO family.

In terms of biological role, involved in DNA repair and RecF pathway recombination. The chain is DNA repair protein RecO from Moorella thermoacetica (strain ATCC 39073 / JCM 9320).